A 156-amino-acid polypeptide reads, in one-letter code: Arginine repressor (156 aa).

The protein belongs to the ArgR family.

The protein resides in the cytoplasm. The protein operates within amino-acid biosynthesis; L-arginine biosynthesis [regulation]. Regulates arginine biosynthesis genes. The chain is Arginine repressor from Sodalis glossinidius (strain morsitans).